A 76-amino-acid chain; its full sequence is Translational regulator CsrA (76 aa).

The protein belongs to the CsrA/RsmA family. Homodimer; the beta-strands of each monomer intercalate to form a hydrophobic core, while the alpha-helices form wings that extend away from the core.

The protein resides in the cytoplasm. In terms of biological role, a translational regulator that binds mRNA to regulate translation initiation and/or mRNA stability. Usually binds in the 5'-UTR at or near the Shine-Dalgarno sequence preventing ribosome-binding, thus repressing translation. Its main target seems to be the major flagellin gene, while its function is anatagonized by FliW. This Pseudothermotoga lettingae (strain ATCC BAA-301 / DSM 14385 / NBRC 107922 / TMO) (Thermotoga lettingae) protein is Translational regulator CsrA.